The primary structure comprises 400 residues: NADH-ubiquinone oxidoreductase 49 kDa subunit (400 aa).

Belongs to the complex I 49 kDa subunit family.

Its subcellular location is the mitochondrion. The catalysed reaction is a ubiquinone + NADH + 5 H(+)(in) = a ubiquinol + NAD(+) + 4 H(+)(out). In terms of biological role, core subunit of the mitochondrial membrane respiratory chain NADH dehydrogenase (Complex I) that is believed to belong to the minimal assembly required for catalysis. Complex I functions in the transfer of electrons from NADH to the respiratory chain. The immediate electron acceptor for the enzyme is believed to be ubiquinone. Component of the iron-sulfur (IP) fragment of the enzyme. Component of the iron-sulfur (IP) fragment of the enzyme. This chain is NADH-ubiquinone oxidoreductase 49 kDa subunit (NAD7), found in Paramecium tetraurelia.